A 417-amino-acid chain; its full sequence is MAEIKNYTLNFGPQHPAAHGVLRLVLELDGEVIQRADPHIGLLHRATEKLAESKTFIQSVPYMDRLDYVSMMVNEHGYVLAIEKLLGIDVPIRAKYIRVLFDEVTRVLNHLMWIGAHALDVGAMAVFLYAFREREDLMDVYEAVSGARMHAAYYRPGGVYRDLPDAMPQYKASKIRNTKALSKLNENRQGSLLDFIEDFFNRFPKCVDEYETLLTDNRIWKQRLVGIGVVSPERALQMGLTGAMLRGSGIEWDLRKKQPYEVYDQMDFDIPVGVNGDCYDRYLVRVEEMRQSTRIAKQCIEWLRKNPGPVMTDNHKVAPPSRVGMKSNMEELIHHFKLFTEGFHVPEGEAYAAVEHPKGEFGIYLVSDGANKPYRLKIRAPGYAHLSALDEMARGHMIADAVTIIGTQDIVFGEVDR.

This sequence belongs to the complex I 49 kDa subunit family. As to quaternary structure, NDH-1 is composed of 14 different subunits. Subunits NuoB, C, D, E, F, and G constitute the peripheral sector of the complex.

Its subcellular location is the cell inner membrane. It catalyses the reaction a quinone + NADH + 5 H(+)(in) = a quinol + NAD(+) + 4 H(+)(out). NDH-1 shuttles electrons from NADH, via FMN and iron-sulfur (Fe-S) centers, to quinones in the respiratory chain. The immediate electron acceptor for the enzyme in this species is believed to be ubiquinone. Couples the redox reaction to proton translocation (for every two electrons transferred, four hydrogen ions are translocated across the cytoplasmic membrane), and thus conserves the redox energy in a proton gradient. This is NADH-quinone oxidoreductase subunit D from Paraburkholderia phymatum (strain DSM 17167 / CIP 108236 / LMG 21445 / STM815) (Burkholderia phymatum).